The following is a 462-amino-acid chain: Argininosuccinate lyase (462 aa).

Belongs to the lyase 1 family. Argininosuccinate lyase subfamily.

The protein localises to the cytoplasm. The enzyme catalyses 2-(N(omega)-L-arginino)succinate = fumarate + L-arginine. Its pathway is amino-acid biosynthesis; L-arginine biosynthesis; L-arginine from L-ornithine and carbamoyl phosphate: step 3/3. The polypeptide is Argininosuccinate lyase (Methylobacterium sp. (strain 4-46)).